The chain runs to 410 residues: Lissencephaly-1 homolog (410 aa).

One can recognise a LisH domain in the interval 7-39 (QRDELNRAIADYLRSNGYEEAYSVFKKEAELDV). The stretch at 56–82 (TSVIRLQKKVMELESKLNEAKEEFTSG) forms a coiled coil. 7 WD repeats span residues 106-147 (GHRS…RTLK), 148-187 (GHTDSVQDISFDHTGKLLASCSADMTIKLWDFQGFECIRT), 190-229 (GHDHNVSSVAIMPNGDHIVSASRDKTIKMWEVQTGYCVKT), 232-271 (GHREWVRMVRPNQDGTLIASCSNDQTVRVWVVATKECKAE), 274-333 (EHEH…CLMT), 336-377 (GHDN…KTLN), and 378-410 (AHEHFVTSLDFHKTAPYVVTGSVDQTVKVWECR).

The protein belongs to the WD repeat LIS1/nudF family. As to quaternary structure, can self-associate. Component of the cytosolic PAF-AH (I) heterotetrameric enzyme, which is composed of PAFAH1B1 (beta), PAFAH1B2 (alpha2) and PAFAH1B3 (alpha1) subunits. The catalytic activity of the enzyme resides in the alpha1 (PAFAH1B3) and alpha2 (PAFAH1B2) subunits, whereas the beta subunit (PAFAH1B1) has regulatory activity. Trimer formation is not essential for the catalytic activity. Interacts with dynein, dynactin, NDE1 and NDEL1.

Its subcellular location is the cytoplasm. The protein localises to the cytoskeleton. It localises to the microtubule organizing center. It is found in the centrosome. Functionally, regulatory subunit (beta subunit) of the cytosolic type I platelet-activating factor (PAF) acetylhydrolase (PAF-AH (I)), an enzyme that catalyzes the hydrolyze of the acetyl group at the sn-2 position of PAF and its analogs and participates in PAF inactivation. Regulates the PAF-AH (I) activity in a catalytic dimer composition-dependent manner. Positively regulates the activity of the minus-end directed microtubule motor protein dynein. May enhance dynein-mediated microtubule sliding by targeting dynein to the microtubule plus end. Required for several dynein- and microtubule-dependent processes such as the maintenance of Golgi integrity, the peripheral transport of microtubule fragments and the coupling of the nucleus and centrosome. May be required for proliferation of neuronal precursors and neuronal migration. The sequence is that of Lissencephaly-1 homolog from Gallus gallus (Chicken).